Here is a 411-residue protein sequence, read N- to C-terminus: POU domain, class 4, transcription factor 2 (411 aa).

The segment at leucine 29–proline 95 is disordered. A compositionally biased stretch (low complexity) spans serine 31 to asparagine 52. Composition is skewed to gly residues over residues alanine 53–arginine 68 and glycine 76–serine 86. The required for transcriptional activation stretch occupies residues cysteine 93–histidine 239. A POU-IV box motif is present at residues arginine 112–isoleucine 121. Positions serine 154 to alanine 168 are enriched in low complexity. Residues serine 154 to leucine 190 are disordered. The span at threonine 172 to proline 186 shows a compositional bias: basic residues. Residues histidine 173–histidine 187 carry the Nuclear speckle targeting signal motif. The segment at alanine 240–isoleucine 411 is required for DNA-binding and transcriptional repression. Residues aspartate 252–glutamate 329 form the POU-specific domain. Positions lysine 347–lysine 406 form a DNA-binding region, homeobox.

It belongs to the POU transcription factor family. Class-4 subfamily. Isoform 2: Interacts with POU4F1 isoform 1; this interaction inhibits both POU4F1 DNA-binding and transcriptional activities. Isoform 2: Interacts (C-terminus) with ESR1 (via DNA-binding domain); this interaction increases the estrogen receptor ESR1 transcriptional activity in a DNA- and ligand 17-beta-estradiol-independent manner. Isoform 2: Interacts (via C-terminus) with TP53 (via N-terminus). Interacts with DLX1 (via homeobox DNA-binding domain); this interaction suppresses DLX1-mediated transcriptional activity in postnatal retina enhancing retinal ganglion cell (RGC) differentiation. Interacts with DLX2 (via homeobox DNA-binding domain); this interaction enhances RGC differentiation. Isoform 1: Interacts (via C-terminus) with ISL1 (via C-terminus). Isoform 1: Interacts with ISL2. Isoform 1: Interacts with LHX2. In terms of tissue distribution, expressed in retinal ganglion cells (RGCs). Expressed in mature osteoclasts. Expressed in cells of layers of the superior colliculus and the adjacent periaqueductal gray (at protein level). Expressed in the brain, peripheral sensory nervous system and retina. Expressed in the optical, intermediate, and deep gray areas of the superior colliculus, the dorsal column of the mesencephalic and pontine central gray, and the lateral interpeduncular nucleus of the brain. Expressed predominantly in postmitotic, terminally differentiated neurons. Expressed in ganglion cell layer (GCL) of the retina.

The protein localises to the nucleus. Its subcellular location is the nucleus speckle. It is found in the cytoplasm. Tissue-specific DNA-binding transcription factor involved in the development and differentiation of target cells. Functions either as activator or repressor by modulating the rate of target gene transcription through RNA polymerase II enzyme in a promoter-dependent manner. Binds to the consensus octamer motif 5'-AT[A/T]A[T/A]T[A/T]A-3' of promoter of target genes. Plays a fundamental role in the gene regulatory network essential for retinal ganglion cell (RGC) differentiation. Binds to an octamer site to form a ternary complex with ISL1; cooperates positively with ISL1 and ISL2 to potentiate transcriptional activation of RGC target genes being involved in RGC fate commitment in the developing retina and RGC axon formation and pathfinding. Inhibits DLX1 and DLX2 transcriptional activities preventing DLX1- and DLX2-mediated ability to promote amacrine cell fate specification. In cooperation with TP53 potentiates transcriptional activation of BAX promoter activity increasing neuronal cell apoptosis. Negatively regulates BAX promoter activity in the absence of TP53. Acts as a transcriptional coactivator via its interaction with the transcription factor ESR1 by enhancing its effect on estrogen response element (ERE)-containing promoter. Antagonizes the transcriptional stimulatory activity of POU4F1 by preventing its binding to an octamer motif. Involved in TNFSF11-mediated terminal osteoclast differentiation. This Mus musculus (Mouse) protein is POU domain, class 4, transcription factor 2.